The primary structure comprises 454 residues: tRNA modification GTPase MnmE (454 aa).

Residues Arg23, Glu80, and Lys120 each coordinate (6S)-5-formyl-5,6,7,8-tetrahydrofolate. One can recognise a TrmE-type G domain in the interval 216–377 (GMKVVIAGRP…LRNNLKQSMG (162 aa)). Asn226 contacts K(+). GTP-binding positions include 226 to 231 (NAGKSS), 245 to 251 (TDIAGTT), 270 to 273 (DTAG), 335 to 338 (NKAD), and 358 to 360 (SAR). Ser230 contributes to the Mg(2+) binding site. Thr245, Ile247, and Thr250 together coordinate K(+). Thr251 is a Mg(2+) binding site. Residue Lys454 coordinates (6S)-5-formyl-5,6,7,8-tetrahydrofolate.

This sequence belongs to the TRAFAC class TrmE-Era-EngA-EngB-Septin-like GTPase superfamily. TrmE GTPase family. As to quaternary structure, homodimer. Heterotetramer of two MnmE and two MnmG subunits. K(+) is required as a cofactor.

Its subcellular location is the cytoplasm. Its function is as follows. Exhibits a very high intrinsic GTPase hydrolysis rate. Involved in the addition of a carboxymethylaminomethyl (cmnm) group at the wobble position (U34) of certain tRNAs, forming tRNA-cmnm(5)s(2)U34. In Salmonella paratyphi A (strain AKU_12601), this protein is tRNA modification GTPase MnmE.